The chain runs to 158 residues: Large ribosomal subunit protein uL11 (158 aa).

Belongs to the universal ribosomal protein uL11 family. In terms of assembly, part of the ribosomal stalk of the 50S ribosomal subunit. Interacts with L10 and the large rRNA to form the base of the stalk. L10 forms an elongated spine to which L12 dimers bind in a sequential fashion forming a multimeric L10(L12)X complex.

In terms of biological role, forms part of the ribosomal stalk which helps the ribosome interact with GTP-bound translation factors. The protein is Large ribosomal subunit protein uL11 of Methanoculleus marisnigri (strain ATCC 35101 / DSM 1498 / JR1).